Here is a 531-residue protein sequence, read N- to C-terminus: Peptide chain release factor 3 (531 aa).

Residues 10–278 (ARRRTFAIIS…DFVEHAPGPL (269 aa)) enclose the tr-type G domain. GTP contacts are provided by residues 19 to 26 (SHPDAGKT), 87 to 91 (DTPGH), and 141 to 144 (NKLD).

It belongs to the TRAFAC class translation factor GTPase superfamily. Classic translation factor GTPase family. PrfC subfamily.

It localises to the cytoplasm. In terms of biological role, increases the formation of ribosomal termination complexes and stimulates activities of RF-1 and RF-2. It binds guanine nucleotides and has strong preference for UGA stop codons. It may interact directly with the ribosome. The stimulation of RF-1 and RF-2 is significantly reduced by GTP and GDP, but not by GMP. In Thioalkalivibrio sulfidiphilus (strain HL-EbGR7), this protein is Peptide chain release factor 3.